Consider the following 768-residue polypeptide: Vacuolar basic amino acid transporter 4 (768 aa).

Over 1-252 (MGKKDRQRKK…HDLTRRRIFS (252 aa)) the chain is Cytoplasmic. Positions 9–40 (KKLREFAKLKNRQRNLRKSVQTLKNEVQREAK) form a coiled coil. Positions 34–172 (EVQREAKVPR…ELPVSSSNSF (139 aa)) are disordered. 3 positions are modified to phosphoserine: S62, S99, and S106. Positions 110 to 121 (KPADKANEDDLK) are enriched in basic and acidic residues. Polar residues predominate over residues 132–159 (SALQSSITDFSDRSVSPLQSITSCNTPM). Phosphoserine occurs at positions 160 and 192. Residues 253-273 (SCMCTYLFFIAMDSSIILVIA) traverse the membrane as a helical segment. Topologically, residues 274-282 (SKIASEFHE) are vacuolar. The chain crosses the membrane as a helical span at residues 283-305 (LWRLSLVISAYLLSNAIGQLVFL). Residues 306-311 (KLSLIS) are Cytoplasmic-facing. A helical membrane pass occupies residues 312–331 (SVKLLLCIAQFSFILGGYLS). Residues 332–334 (WSS) are Vacuolar-facing. Residues 335–357 (AHFWTFIFARCVTGFGGGSLIAL) form a helical membrane-spanning segment. Topologically, residues 358–375 (KSTIMNRFSQKNDSRYSL) are cytoplasmic. The chain crosses the membrane as a helical span at residues 376-396 (SASMITFAMGVVIGPFMMNLF). The Vacuolar segment spans residues 397–406 (DSSHGSGWRN). A helical transmembrane segment spans residues 407–427 (AFLIPVPFCLVNASIMLADMY). Over 428–447 (SVKSTLYGRPTPTLWKRFKN) the chain is Cytoplasmic. Residues 448 to 468 (TLLSPDLYEILTLTLFLLCFV) traverse the membrane as a helical segment. Over 469 to 481 (QVTSLDLTGLKNN) the chain is Vacuolar. N480 carries N-linked (GlcNAc...) asparagine glycosylation. Residues 482-502 (TMIQALLFSVIIVCGILFFLI) form a helical membrane-spanning segment. The Cytoplasmic portion of the chain corresponds to 503-522 (ETSDTYMNSVISMSLQGDKR). The helical transmembrane segment at 523–543 (LIWTMIGISFCFAALMCIIPF) threads the bilayer. Residues 544 to 562 (GTTYFIIVLNLSTLQLAER) are Vacuolar-facing. N-linked (GlcNAc...) asparagine glycosylation is present at N553. Residues 563–583 (LSPFFFSIVLGYFSVSYFWKS) traverse the membrane as a helical segment. Over 584 to 587 (KGQN) the chain is Cytoplasmic. A helical membrane pass occupies residues 588–608 (FLLKFVLSGATLLLYVALMGV). The Vacuolar portion of the chain corresponds to 609–617 (SLNLPVWKQ). The helical transmembrane segment at 618–638 (YICLSLPFLGSSMILTLLSNL) threads the bilayer. Residues 639 to 653 (YHEYHEQRKSPISGS) lie on the Cytoplasmic side of the membrane. Residues 654–674 (IVYCFGAVGGTVGISLGGYVF) form a helical membrane-spanning segment. At 675–734 (HKTLIKLMHEKVMPFSKQGYLKKDLLKIIKHATESSDWVHESAPKFVFQTLIECYLQACR) the chain is on the vacuolar side. Residues 735-755 (NVFKLSTLFFTITVVAIFIFN) form a helical membrane-spanning segment. The Cytoplasmic portion of the chain corresponds to 756 to 768 (RIHCRSQNCLSLS).

The protein belongs to the major facilitator superfamily.

It localises to the vacuole membrane. Its function is as follows. Transporter required for vacuolar uptake of basic amino acids. The protein is Vacuolar basic amino acid transporter 4 (VBA4) of Saccharomyces cerevisiae (strain ATCC 204508 / S288c) (Baker's yeast).